A 319-amino-acid chain; its full sequence is MATVKISLSLASLSPSSSSSSIQSKLSPSFIPNAAPAKAVKLRFNGKSLRAKPMVYRSSRSVGVTCSASSSLTTLPSALLFDCDGVLVDTEKDGHRISFNDTFKERDLNVTWDVDLYGELLKIGGGKERMTAYFNKVGWPEKAPKDEAERKEFIAGLHKQKTELFMVLIEKKLLPLRPGVAKLVDQALTNGVKVAVCSTSNEKAVSAIVSCLLGPERAEKIKIFAGDVVPKKKPDPAIYNLAAETLGVDPSKCVVVEDSAIGLAAAKAAGMTCIVTKSGYTADEDFENADAVFDCIGDPPEERFDLAFCGSLLRKQFVS.

The transit peptide at Met1–Thr65 directs the protein to the chloroplast. The Nucleophile role is filled by Asp82. Residues Asp82 and Asp84 each contribute to the Mg(2+) site. A substrate-binding site is contributed by Asp82. Asp84 (proton donor) is an active-site residue. Substrate contacts are provided by residues Glu91, Gly125–Arg129, His158–Lys161, and Ser198–Ala204. Asp258 is a Mg(2+) binding site.

This sequence belongs to the HAD-like hydrolase superfamily. DOG/GPP family. It depends on Mg(2+) as a cofactor.

It is found in the plastid. The protein localises to the chloroplast. The catalysed reaction is D-xylulose 1,5-bisphosphate + H2O = D-xylulose 5-phosphate + phosphate. Its function is as follows. Highly selective xylulose-1,5-bisphosphate (XuBP) phosphatase. Also shows activity towards ribulose-1,5-bisphosphate (RuBP) and fructose-1,6-bisphosphate (FBP), but not towards fructose-6-phosphate (F6P) or ribulose-5-phosphate (Ru5P). Degrades xylulose-1,5-bisphosphate, a potent inhibitor of rubisco produced by the rubisco itself. The chain is CBBY-like protein from Arabidopsis thaliana (Mouse-ear cress).